Here is a 256-residue protein sequence, read N- to C-terminus: Spheroidene monooxygenase (256 aa).

Positions 1 to 23 are enriched in low complexity; sequence MTNELSNAAGASQQGPAASSFSA. The segment at 1-26 is disordered; the sequence is MTNELSNAAGASQQGPAASSFSADTP.

The protein belongs to the CrtA family. It depends on heme as a cofactor.

It carries out the reaction spheroidene + 4 reduced [2Fe-2S]-[ferredoxin] + 2 O2 + 4 H(+) = spheroiden-2-one + 4 oxidized [2Fe-2S]-[ferredoxin] + 3 H2O. The enzyme catalyses spirilloxanthin + 4 reduced [2Fe-2S]-[ferredoxin] + 2 O2 + 4 H(+) = 2-oxospirilloxanthin + 4 oxidized [2Fe-2S]-[ferredoxin] + 3 H2O. It catalyses the reaction 2-oxospirilloxanthin + 4 reduced [2Fe-2S]-[ferredoxin] + 2 O2 + 4 H(+) = 2,2'-dioxospirilloxanthin + 4 oxidized [2Fe-2S]-[ferredoxin] + 3 H2O. The catalysed reaction is spheroidene + 2 reduced [2Fe-2S]-[ferredoxin] + O2 + 2 H(+) = 2-hydroxyspheroidene + 2 oxidized [2Fe-2S]-[ferredoxin] + H2O. It carries out the reaction 2-hydroxyspheroidene + 2 reduced [2Fe-2S]-[ferredoxin] + O2 + 2 H(+) = 2,2-dihydroxyspheroidene + 2 oxidized [2Fe-2S]-[ferredoxin] + H2O. The enzyme catalyses 2,2-dihydroxyspheroidene = spheroiden-2-one + H2O. It catalyses the reaction spirilloxanthin + 2 reduced [2Fe-2S]-[ferredoxin] + O2 + 2 H(+) = 2-hydroxyspirilloxanthin + 2 oxidized [2Fe-2S]-[ferredoxin] + H2O. The catalysed reaction is 2-hydroxyspirilloxanthin + 2 reduced [2Fe-2S]-[ferredoxin] + O2 + 2 H(+) = 2,2-dihydroxyspirilloxanthin + 2 oxidized [2Fe-2S]-[ferredoxin] + H2O. It carries out the reaction 2,2-dihydroxyspirilloxanthin = 2-oxospirilloxanthin + H2O. The enzyme catalyses 2-oxospirilloxanthin + 2 reduced [2Fe-2S]-[ferredoxin] + O2 + 2 H(+) = 2'-hydroxy-2-oxospirilloxanthin + 2 oxidized [2Fe-2S]-[ferredoxin] + H2O. It catalyses the reaction 2'-hydroxy-2-oxospirilloxanthin + 2 reduced [2Fe-2S]-[ferredoxin] + O2 + 2 H(+) = 2',2'-dihydroxy-2-oxospirilloxanthin + 2 oxidized [2Fe-2S]-[ferredoxin] + H2O. The catalysed reaction is 2',2'-dihydroxy-2-oxospirilloxanthin = 2,2'-dioxospirilloxanthin + H2O. It functions in the pathway carotenoid biosynthesis; spheroidene biosynthesis. The protein operates within carotenoid biosynthesis; spirilloxanthin biosynthesis. Involved in the biosynthesis of the carotenoids spheroidene and spirilloxanthin. Catalyzes the introduction of one keto group at the C-2 position of spheroidene and two keto groups at the C-2 and C-2' positions of spirilloxanthin. The polypeptide is Spheroidene monooxygenase (Rubrivivax gelatinosus (Rhodocyclus gelatinosus)).